Consider the following 225-residue polypeptide: 2-C-methyl-D-erythritol 4-phosphate cytidylyltransferase (225 aa).

The protein belongs to the IspD/TarI cytidylyltransferase family. IspD subfamily.

The catalysed reaction is 2-C-methyl-D-erythritol 4-phosphate + CTP + H(+) = 4-CDP-2-C-methyl-D-erythritol + diphosphate. It functions in the pathway isoprenoid biosynthesis; isopentenyl diphosphate biosynthesis via DXP pathway; isopentenyl diphosphate from 1-deoxy-D-xylulose 5-phosphate: step 2/6. Its function is as follows. Catalyzes the formation of 4-diphosphocytidyl-2-C-methyl-D-erythritol from CTP and 2-C-methyl-D-erythritol 4-phosphate (MEP). This is 2-C-methyl-D-erythritol 4-phosphate cytidylyltransferase from Clostridium perfringens (strain SM101 / Type A).